The sequence spans 796 residues: Probable phosphoketolase (796 aa).

Belongs to the XFP family. Requires thiamine diphosphate as cofactor.

This is Probable phosphoketolase from Clostridium acetobutylicum (strain ATCC 824 / DSM 792 / JCM 1419 / IAM 19013 / LMG 5710 / NBRC 13948 / NRRL B-527 / VKM B-1787 / 2291 / W).